Here is a 240-residue protein sequence, read N- to C-terminus: Phosducin-like protein 3 (240 aa).

The residue at position 1 (Met1) is an N-acetylmethionine. In terms of domain architecture, Phosducin spans 27–181; the sequence is KELEEEEAEK…EGDIKAQFIG (155 aa). Phosphoserine is present on residues Ser44, Ser65, Ser235, and Ser237. The thioredoxin fold stretch occupies residues 92–240; sequence FGEVLEISGK…MRRDSDSEDD (149 aa).

Belongs to the phosducin family. As to quaternary structure, interacts (via thioredoxin fold region) with KDR/VEGFR2 (via juxtamembrane domain). Forms ternary complexes with the chaperonin CCT complex and actin substrate, leading to inhibition of actin folding. Interacts with XIAP (via BIR 3 and RING domain). Interacts with HSP90AA1 and HSP90AB1. In terms of processing, N-terminal methionine acetylation destabilizes the protein. In terms of tissue distribution, expressed in blood vessels (at protein level).

It is found in the cytoplasm. The protein localises to the perinuclear region. It localises to the endoplasmic reticulum. In terms of biological role, acts as a chaperone for the angiogenic VEGF receptor KDR/VEGFR2, increasing its abundance by inhibiting its ubiquitination and degradation. Inhibits the folding activity of the chaperonin-containing T-complex (CCT) which leads to inhibition of cytoskeletal actin folding. Acts as a chaperone during heat shock alongside HSP90 and HSP40/70 chaperone complexes. Modulates the activation of caspases during apoptosis. This is Phosducin-like protein 3 (Pdcl3) from Mus musculus (Mouse).